Consider the following 212-residue polypeptide: N-acetyltransferase 9-like protein (212 aa).

Residues 34 to 201 (EEIREQTASE…INLLNLKNND (168 aa)) enclose the N-acetyltransferase domain.

The protein belongs to the acetyltransferase family. GNAT subfamily.

In Dictyostelium discoideum (Social amoeba), this protein is N-acetyltransferase 9-like protein (nat9).